We begin with the raw amino-acid sequence, 225 residues long: Cardiotrophin-like cytokine factor 1 (225 aa).

Residues 1–27 form the signal peptide; the sequence is MDLRAGDSWGMLACLCTVLWHLPAVPA. A glycan (N-linked (GlcNAc...) asparagine) is linked at Asn29.

Belongs to the IL-6 superfamily. As to quaternary structure, forms a heteromeric complex with cardiotrophin-like cytokine CRLF1/CLF-1; the CRLF1-CLCF1 complex is a ligand for the ciliary neurotrophic factor receptor/CNTFR. The CRLF1-CLCF1 heterodimer binds SORL1 (via N-terminal ectodomain); within this complex, the interaction is mediated predominantly by the CRLF1 moiety. The tripartite signaling complex formed by CRLF1, CLCF1 and CNTFR also binds SORL1.

It is found in the secreted. In complex with CRLF1, forms a heterodimeric neurotropic cytokine that plays a crucial role during neuronal development. Also stimulates B-cells. Binds to and activates the ILST/gp130 receptor. The protein is Cardiotrophin-like cytokine factor 1 (Clcf1) of Mus musculus (Mouse).